The chain runs to 96 residues: Myosuppressin (96 aa).

Positions 1 to 24 (MALGNGYYCAVVCVVLACASVVLC) are cleaved as a signal peptide. The propeptide occupies 25-80 (APAQLCAGAADDDPRAARFCQALNTFLELYAEAAGEQVPEYQALVRDYPQLLDTGM). Gln83 is subject to Pyrrolidone carboxylic acid; partial. Position 92 is a phenylalanine amide (Phe92). A propeptide is located at residue Arg96.

This sequence belongs to the myosuppressin family. As to expression, expressed in corpora cardiaca (CC), corpora allata (CA), antennal lobe (AL) and gnathal ganglion (GNG) (at protein level). In its non-pyroglutamate form, expression in GNG detected in all animals, in AL, CC and in CA in most animals (at protein level). In its pyroglutamate form, expression in CC, CA and GNG detected in all animals, in AL in some animals (at protein level).

The protein localises to the secreted. Functionally, myoinhibiting neuropeptide. This chain is Myosuppressin, found in Agrotis ipsilon (Black cutworm moth).